Consider the following 341-residue polypeptide: Probable membrane-associated kinase regulator 1 (341 aa).

Disordered stretches follow at residues 1 to 29 (MRRQPPRPRNSPPQSHSSPSSSSSEFEFN), 67 to 122 (TLGS…SSRP), 158 to 185 (PKTNLHHHSSSSSTATTAAAPSSVKRMS), 206 to 230 (LSPKQSSNIKTESSSSLKDSGNNIR), and 288 to 310 (RGGFPVHQGSCSSSSSNNNSVSS). Low complexity-rich tracts occupy residues 12-29 (PPQSHSSPSSSSSEFEFN), 67-108 (TLGS…SFPL), and 167-180 (SSSSTATTAAAPSS). The span at 208–230 (PKQSSNIKTESSSSLKDSGNNIR) shows a compositional bias: polar residues. Over residues 297-310 (SCSSSSSNNNSVSS) the composition is skewed to low complexity.

As to quaternary structure, a C-terminus-derived peptide binds BRI1 in vitro.

Its subcellular location is the cell membrane. May negatively regulate brassinosteroid signaling. The sequence is that of Probable membrane-associated kinase regulator 1 (MAKR1) from Arabidopsis thaliana (Mouse-ear cress).